The sequence spans 379 residues: Guanine nucleotide-binding protein G(s) subunit alpha (379 aa).

The disordered stretch occupies residues 1 to 29 (MGCFGSAGAKGDAEENKKRKEANKNINKQ). A lipid anchor (N-palmitoyl glycine) is attached at Gly-2. Residue Cys-3 is the site of S-palmitoyl cysteine attachment. In terms of domain architecture, G-alpha spans 39-379 (ATHRLLLLGA…RMHLRQYELL (341 aa)). The G1 motif stretch occupies residues 42 to 55 (RLLLLGAGESGKST). GTP-binding positions include 47-54 (GAGESGKS), 183-189 (LRCRVLT), 208-212 (DVGGQ), 277-280 (NKQD), and Ala-351. Positions 54 and 189 each coordinate Mg(2+). The G2 motif stretch occupies residues 181-189 (DILRCRVLT). Residues 204–213 (FHMFDVGGQR) are G3 motif. A G4 motif region spans residues 273-280 (ILFLNKQD). A G5 motif region spans residues 349–354 (TCAVDT).

Belongs to the G-alpha family. G(s) subfamily. In terms of assembly, g proteins are composed of 3 units; alpha, beta and gamma. The alpha chain contains the guanine nucleotide binding site.

In terms of biological role, guanine nucleotide-binding proteins (G proteins) are involved as modulators or transducers in various transmembrane signaling systems. The G(s) protein is involved in hormonal regulation of adenylate cyclase: it activates the cyclase in response to beta-adrenergic stimuli. This Homarus americanus (American lobster) protein is Guanine nucleotide-binding protein G(s) subunit alpha.